Here is a 78-residue protein sequence, read N- to C-terminus: Large ribosomal subunit protein bL31 (78 aa).

Residues cysteine 16, cysteine 18, cysteine 38, and cysteine 41 each contribute to the Zn(2+) site.

Belongs to the bacterial ribosomal protein bL31 family. Type A subfamily. In terms of assembly, part of the 50S ribosomal subunit. Zn(2+) is required as a cofactor.

Binds the 23S rRNA. The sequence is that of Large ribosomal subunit protein bL31 from Frankia alni (strain DSM 45986 / CECT 9034 / ACN14a).